We begin with the raw amino-acid sequence, 417 residues long: Protein translocase subunit SecD (417 aa).

The next 6 membrane-spanning stretches (helical) occupy residues 9–29 (LLVS…PLVS), 236–256 (ASMK…LLYY), 258–278 (LSGL…LAVM), 288–308 (PGMA…VLIF), 333–353 (FTTI…LFYL), and 360–380 (GFAV…VTVT).

Belongs to the SecD/SecF family. SecD subfamily. Forms a complex with SecF. Part of the essential Sec protein translocation apparatus which comprises SecA, SecYEG and auxiliary proteins SecDF. Other proteins may also be involved.

It localises to the cell membrane. Part of the Sec protein translocase complex. Interacts with the SecYEG preprotein conducting channel. SecDF uses the proton motive force (PMF) to complete protein translocation after the ATP-dependent function of SecA. This chain is Protein translocase subunit SecD, found in Acidaminococcus fermentans (strain ATCC 25085 / DSM 20731 / CCUG 9996 / CIP 106432 / VR4).